Here is a 301-residue protein sequence, read N- to C-terminus: MTALNRAVASARVGTEVIRVRGLTFRYPKAAEPAVRGMEFTVGRGEIFGLLGPSGAGKSTTQKLLIGLLRDHGGQATVWDKEPAEWGPDYYERIGVSFELPNHYQKLTGYENLRFFASLYAGATADPMQLLAAVGLADDAHTLVGKYSKGMQMRLPFARSLINDPELLFLDEPTSGLDPVNARKIKDIIVDLKARGRTIFLTTHDMATADELCDRVAFVVDGRIVALDSPTELKIARSRRRVRVEYRGDGGGLETAEFGMDGLADDPAFHSVLRNHHVETIHSREASLDDVFVEVTGRQLT.

One can recognise an ABC transporter domain in the interval 18–246 (IRVRGLTFRY…RSRRRVRVEY (229 aa)). 52–59 (GPSGAGKS) lines the ATP pocket.

Belongs to the ABC transporter superfamily. As to quaternary structure, the complex is composed of 2 ATP-binding proteins (Rv2688c) and 2 transmembrane proteins (Rv2686c and Rv2687c).

It localises to the cell membrane. With respect to regulation, inhibited by reserpine and verapamil. In terms of biological role, part of the ABC transporter complex Rv2686c/Rv2687c/Rv2688c involved in fluoroquinolones export. Confers resistance to ciprofloxacin and, to a lesser extent, norfloxacin, moxifloxacin and sparfloxacin. Probably responsible for energy coupling to the transport system. This is Fluoroquinolones export ATP-binding protein Rv2688c from Mycobacterium tuberculosis (strain ATCC 25618 / H37Rv).